The sequence spans 294 residues: MTKAVLTSISQLALKALLYEVSLSPKPGLVDRFDNGAHDDMSFMTFIDSMIALSPFFQAYIETGFAYAKEEQLLLFNRLRQLGQKAEETMFCATQGINTHKGLNFSMALLLGATGAYLARTPHLMTDLGCFSKEDTLAICRLVKPMTAHLIQADLGHLNTKKEFTYGEQLFVTYGIKGPRGEASEGFTTLTDHALPYFRQMISQNDPETSQLRLLVYLMSIVEDGNLIHRGGIEAWKGVKADMRLLLQQDLSTTDLRLALSSYNQCLINQHLSPGGAADLLALTFYFAFLEKLL.

The protein belongs to the CitG/MdcB family.

The catalysed reaction is 3'-dephospho-CoA + ATP = 2'-(5''-triphospho-alpha-D-ribosyl)-3'-dephospho-CoA + adenine. The protein is Probable 2-(5''-triphosphoribosyl)-3'-dephosphocoenzyme-A synthase of Streptococcus pyogenes serotype M5 (strain Manfredo).